Consider the following 528-residue polypeptide: Calcium-dependent protein kinase 4 (528 aa).

Residues 1-36 (MGQEVSSVNNTKNEHHKTNKKSLKGGNERHEMKESS) are disordered. Gly-2 carries N-myristoyl glycine lipidation. A compositionally biased stretch (basic residues) spans 14–23 (EHHKTNKKSL). The Protein kinase domain occupies 71–329 (KGIKILGKGS…RDALEHEWIK (259 aa)). Residues 76 to 84 (LGKGSFGEV) and Lys-99 contribute to the ATP site. Residue Asp-193 is the Proton acceptor of the active site. The J domain autoinhibitory motif motif lies at 350 to 358 (NIRQFQSTQ). The tract at residues 350–386 (NIRQFQSTQKLAQAALLYMGSKLTTIDETKELTKIFK) is j domain. The J domain EF-hand interaction motif motif lies at 359–368 (KLAQAALLYM). EF-hand domains follow at residues 376-411 (DETK…LLKL), 427-458 (EVDQ…RKLL), 459-494 (LSTE…SDVS), and 496-528 (ECWK…LCNY). The Ca(2+) site is built by Asp-389, Asn-391, Asp-393, Gln-395, Glu-400, Asp-436, Asp-438, Asn-440, Tyr-442, Glu-447, Asp-472, Asp-474, Ser-476, Lys-478, Glu-483, Asp-506, Asn-508, Asp-510, Glu-512, and Glu-517.

Belongs to the protein kinase superfamily. Ser/Thr protein kinase family. CDPK subfamily. As to quaternary structure, may interact with the pre-replication MCM complex prior male gametogenesis activation. Mg(2+) serves as cofactor. Myristoylated; myristoylation may target it to different subcellular compartments. During male gametogenesis, myristoylation is required to initiate DNA replication but not for mitotic spindle assembly or axoneme activation. Post-translationally, not palmitoylated. In terms of processing, may be autophosphorylated on Thr-234 in vitro.

The protein resides in the cytoplasm. It localises to the cell membrane. The catalysed reaction is L-seryl-[protein] + ATP = O-phospho-L-seryl-[protein] + ADP + H(+). It catalyses the reaction L-threonyl-[protein] + ATP = O-phospho-L-threonyl-[protein] + ADP + H(+). Its activity is regulated as follows. Activated by calcium. Upon calcium binding to the EF-hand domains, the C-terminus of the junction domain (J domain) undergoes a conformational change which results in the dissociation of the pseudo-substrate inhibitory motif from the catalytic domain. This, in turn, may facilitate the autophosphorylation of the activation loop at Thr-234, which leads to the kinase activation. Intracellular calcium increase is triggered by xanthurenic acid (XA), a small mosquito molecule that induces the differentiation of specialized transmission stages, the gametocytes, into male and female gametes. Activated by a decrease in temperature (20 degrees Celsius) and an increase in pH (7.6) occurring when the parasite is ingested by in the mosquito. Functionally, calcium-dependent protein kinase which acts as a sensor and effector of intracellular Ca(2+) levels probably in part downstream of cGMP-activated PKG kinase. Plays a central role in the host erythrocytes and hepatocytes infection cycles, sexual reproduction and mosquito transmission of the parasite. During the liver stage, involved in sporozoite motility and thus in sporozoite invasion of host hepatocytes, probably together with CDPK1 and CDPK5. Involved in merosome egress from host hepatocytes, probably together with CDPK5. During the asexual blood stage, involved in merozoite invasion of host erythrocytes and motility by stabilizing the inner membrane complex, a structure below the plasma membrane which acts as an anchor for the glidosome, an acto-myosin motor. Required for cell cycle progression in the male gametocyte. During male gametogenesis in the mosquito gut, required to initiate the first round of DNA replication, probably by facilitating the assembly of the pre-replicative MCM complex, to assemble the first mitotic spindle and, at the end of gametogenesis, to initiate axoneme motility, cytokinesis and subsequent exflagellation. For each of these steps, may phosphorylate SOC1, SOC2 and SOC3, respectively. Together with CDPK1, regulates ookinete gliding in the mosquito host midgut. The chain is Calcium-dependent protein kinase 4 from Plasmodium falciparum (isolate 3D7).